Reading from the N-terminus, the 375-residue chain is 1-deoxy-D-xylulose 5-phosphate reductoisomerase (375 aa).

Residues threonine 12, glycine 13, serine 14, isoleucine 15, asparagine 39, and asparagine 115 each contribute to the NADPH site. Lysine 116 contributes to the 1-deoxy-D-xylulose 5-phosphate binding site. Glutamate 117 is a binding site for NADPH. Aspartate 141 is a Mn(2+) binding site. Positions 142, 143, 163, and 186 each coordinate 1-deoxy-D-xylulose 5-phosphate. Mn(2+) is bound at residue glutamate 143. Glycine 192 contributes to the NADPH binding site. Residues serine 199, asparagine 204, lysine 205, and glutamate 208 each coordinate 1-deoxy-D-xylulose 5-phosphate. Glutamate 208 contributes to the Mn(2+) binding site.

It belongs to the DXR family. Mg(2+) serves as cofactor. The cofactor is Mn(2+).

The enzyme catalyses 2-C-methyl-D-erythritol 4-phosphate + NADP(+) = 1-deoxy-D-xylulose 5-phosphate + NADPH + H(+). It participates in isoprenoid biosynthesis; isopentenyl diphosphate biosynthesis via DXP pathway; isopentenyl diphosphate from 1-deoxy-D-xylulose 5-phosphate: step 1/6. Functionally, catalyzes the NADPH-dependent rearrangement and reduction of 1-deoxy-D-xylulose-5-phosphate (DXP) to 2-C-methyl-D-erythritol 4-phosphate (MEP). The polypeptide is 1-deoxy-D-xylulose 5-phosphate reductoisomerase (Thermotoga neapolitana (strain ATCC 49049 / DSM 4359 / NBRC 107923 / NS-E)).